The primary structure comprises 162 residues: Probable chemoreceptor glutamine deamidase CheD (162 aa).

The protein belongs to the CheD family.

It carries out the reaction L-glutaminyl-[protein] + H2O = L-glutamyl-[protein] + NH4(+). Probably deamidates glutamine residues to glutamate on methyl-accepting chemotaxis receptors (MCPs), playing an important role in chemotaxis. This is Probable chemoreceptor glutamine deamidase CheD from Caldanaerobacter subterraneus subsp. tengcongensis (strain DSM 15242 / JCM 11007 / NBRC 100824 / MB4) (Thermoanaerobacter tengcongensis).